The sequence spans 319 residues: Protein HEXIM1 (319 aa).

Over residues 1 to 22 (MELIKEETAPEDDSRGRQRDCR) the composition is skewed to basic and acidic residues. 4 disordered regions span residues 1–111 (MELI…KKRR), 157–223 (LMEE…LQKD), 262–286 (NNWLRHVRRNPESPADGTGSQRVRE), and 299–319 (NELLLKTPASNEPGLNQSQPS). Residues 24 to 35 (SVVSSKQVQRNQ) are compositionally biased toward polar residues. Residues 49-61 (PMCRDRSDPEPRT) show a composition bias toward basic and acidic residues. Basic residues predominate over residues 97-111 (GKKKHRRRPSKKKRR). Positions 185–202 (TASEDENFEAEEDDEEEG) are enriched in acidic residues. Positions 203 to 216 (GGGSDGMGRPGQAG) are enriched in gly residues. Residues 240 to 306 (SKQELVREYL…ENNELLLKTP (67 aa)) are a coiled coil. A compositionally biased stretch (polar residues) spans 306–319 (PASNEPGLNQSQPS).

This sequence belongs to the HEXIM family. Homooligomer and heterooligomer. Core component of the 7SK RNP complex.

The protein resides in the nucleus. It localises to the cytoplasm. Transcriptional regulator which functions as a general RNA polymerase II transcription inhibitor. Core component of the 7SK RNP complex: in cooperation with 7SK snRNA sequesters P-TEFb in a large inactive 7SK snRNP complex preventing RNA polymerase II phosphorylation and subsequent transcriptional elongation. Plays a role in the regulation of DNA virus-mediated innate immune response by assembling into the HDP-RNP complex, a complex that serves as a platform for IRF3 phosphorylation and subsequent innate immune response activation through the cGAS-STING pathway. This chain is Protein HEXIM1 (hexim1), found in Danio rerio (Zebrafish).